Consider the following 609-residue polypeptide: Arginine--tRNA ligase (609 aa).

Positions Val114–His124 match the 'HIGH' region motif.

This sequence belongs to the class-I aminoacyl-tRNA synthetase family. As to quaternary structure, monomer.

Its subcellular location is the cytoplasm. It catalyses the reaction tRNA(Arg) + L-arginine + ATP = L-arginyl-tRNA(Arg) + AMP + diphosphate. This chain is Arginine--tRNA ligase, found in Deinococcus radiodurans (strain ATCC 13939 / DSM 20539 / JCM 16871 / CCUG 27074 / LMG 4051 / NBRC 15346 / NCIMB 9279 / VKM B-1422 / R1).